A 450-amino-acid polypeptide reads, in one-letter code: UDP-N-acetylmuramoylalanine--D-glutamate ligase (450 aa).

ATP is bound at residue Gly-119 to Thr-125.

It belongs to the MurCDEF family.

It localises to the cytoplasm. The catalysed reaction is UDP-N-acetyl-alpha-D-muramoyl-L-alanine + D-glutamate + ATP = UDP-N-acetyl-alpha-D-muramoyl-L-alanyl-D-glutamate + ADP + phosphate + H(+). It functions in the pathway cell wall biogenesis; peptidoglycan biosynthesis. Its function is as follows. Cell wall formation. Catalyzes the addition of glutamate to the nucleotide precursor UDP-N-acetylmuramoyl-L-alanine (UMA). The polypeptide is UDP-N-acetylmuramoylalanine--D-glutamate ligase (Streptococcus pneumoniae serotype 4 (strain ATCC BAA-334 / TIGR4)).